The following is a 78-amino-acid chain: Large ribosomal subunit protein eL20 (78 aa).

It belongs to the eukaryotic ribosomal protein eL20 family. In terms of assembly, part of the 50S ribosomal subunit. Binds 23S rRNA.

The polypeptide is Large ribosomal subunit protein eL20 (Pyrobaculum aerophilum (strain ATCC 51768 / DSM 7523 / JCM 9630 / CIP 104966 / NBRC 100827 / IM2)).